Here is a 490-residue protein sequence, read N- to C-terminus: Glucose-6-phosphate 1-dehydrogenase (490 aa).

Residues arginine 49, aspartate 91–valine 92, and lysine 146 each bind NADP(+). Substrate-binding residues include histidine 176, lysine 180, glutamate 214, and aspartate 233. Residue histidine 238 is the Proton acceptor of the active site. Substrate contacts are provided by lysine 338 and lysine 343.

It belongs to the glucose-6-phosphate dehydrogenase family.

The catalysed reaction is D-glucose 6-phosphate + NADP(+) = 6-phospho-D-glucono-1,5-lactone + NADPH + H(+). Its pathway is carbohydrate degradation; pentose phosphate pathway; D-ribulose 5-phosphate from D-glucose 6-phosphate (oxidative stage): step 1/3. Functionally, catalyzes the oxidation of glucose 6-phosphate to 6-phosphogluconolactone. The protein is Glucose-6-phosphate 1-dehydrogenase of Buchnera aphidicola subsp. Schizaphis graminum (strain Sg).